The primary structure comprises 147 residues: MVHWTAEEKATIASVWGKVDIEQDGHDALSRLLVVYPWTQRYFSSFGNLSNVSAVSGNVKVKAHGNKVLSAVGSAIQHLDDVKSHLKGLSKSHAEDLHVDPENFKRLADVLVIVLAAKLGSAFTPQVQAVWEKLNATLVAALSHGYF.

One can recognise a Globin domain in the interval 3-147 (HWTAEEKATI…LVAALSHGYF (145 aa)). Residues His64 and His93 each contribute to the heme b site.

It belongs to the globin family. In terms of assembly, heterotetramer of two alpha chains and two beta chains. As to expression, red blood cells.

Functionally, this is a larval (tadpole) beta-globin. The polypeptide is Hemoglobin subunit beta-2 (hbb2) (Xenopus tropicalis (Western clawed frog)).